A 367-amino-acid chain; its full sequence is AdoMet-dependent heme synthase (367 aa).

The 224-residue stretch at 15–238 folds into the Radical SAM core domain; that stretch reads DGSPTCKLIA…TSMHLKATCA (224 aa). Positions 31, 35, and 38 each coordinate [4Fe-4S] cluster.

This sequence belongs to the radical SAM superfamily. The cofactor is [4Fe-4S] cluster.

It catalyses the reaction Fe-coproporphyrin III + 2 S-adenosyl-L-methionine = heme b + 2 5'-deoxyadenosine + 2 L-methionine + 2 CO2. The protein operates within porphyrin-containing compound metabolism; protoheme biosynthesis. In terms of biological role, involved in siroheme-dependent heme b biosynthesis. Catalyzes the conversion of Fe-coproporphyrin III into heme by the oxidative decarboxylation of two propionate side chains. In Nitratidesulfovibrio vulgaris (strain ATCC 29579 / DSM 644 / CCUG 34227 / NCIMB 8303 / VKM B-1760 / Hildenborough) (Desulfovibrio vulgaris), this protein is AdoMet-dependent heme synthase.